A 346-amino-acid chain; its full sequence is Olfactory receptor 13D1 (346 aa).

Residues 1 to 57 (MYRFTDFDVSNISIYLNHVLFYTTQQAGDLEHMETRNYSAMTEFFLVGLSQYPELQL) lie on the Extracellular side of the membrane. N-linked (GlcNAc...) asparagine glycosylation is present at N37. A helical membrane pass occupies residues 58–78 (FLFLLCLIMYMIILLGNSLLI). The Cytoplasmic segment spans residues 79 to 86 (IITILDSR). The helical transmembrane segment at 87 to 107 (LHTPMYFFLGNLSFLDICYTS) threads the bilayer. Over 108-131 (SSIPPMLIIFMSERKSISFIGCAL) the chain is Extracellular. C129 and C221 are joined by a disulfide. Residues 132-152 (QMVVSLGLGSTECVLLAVMAY) traverse the membrane as a helical segment. Residues 153–171 (DHYVAICNPLRYSIIMNGV) are Cytoplasmic-facing. The helical transmembrane segment at 172 to 192 (LYVQMAAWSWIIGCLTSLLQT) threads the bilayer. Residues 193–229 (VLTMMLPFCGNNVIDHITCEILALLKLVCSDITINVL) are Extracellular-facing. A helical transmembrane segment spans residues 230 to 249 (IMTVTNIVSLVILLLLIFIS). Over 250 to 269 (YVFILSSILRINCAEGRKKA) the chain is Cytoplasmic. A helical membrane pass occupies residues 270–290 (FSTCSAHSIVVILFYGSALFM). At 291 to 303 (YMKPKSKNTNTSD) the chain is on the extracellular side. A glycan (N-linked (GlcNAc...) asparagine) is linked at N300. A helical membrane pass occupies residues 304–324 (EIIGLSYGVVSPMLNPIIYSL). Over 325–346 (RNKEVKEAVKKVLSRHLHLLKM) the chain is Cytoplasmic.

This sequence belongs to the G-protein coupled receptor 1 family.

The protein resides in the cell membrane. Its function is as follows. Odorant receptor. In Homo sapiens (Human), this protein is Olfactory receptor 13D1 (OR13D1).